The following is a 413-amino-acid chain: Tyrosine--tRNA ligase (413 aa).

The short motif at 60–69 (PTAPDIHIGH) is the 'HIGH' region element. The 'KMSKS' region motif lies at 244-248 (KMSKS). K247 contributes to the ATP binding site. Residues 352 to 412 (LGIAQLLKQA…GKRRFARVTL (61 aa)) enclose the S4 RNA-binding domain.

It belongs to the class-I aminoacyl-tRNA synthetase family. TyrS type 2 subfamily. In terms of assembly, homodimer.

It localises to the cytoplasm. The enzyme catalyses tRNA(Tyr) + L-tyrosine + ATP = L-tyrosyl-tRNA(Tyr) + AMP + diphosphate + H(+). Its function is as follows. Catalyzes the attachment of tyrosine to tRNA(Tyr) in a two-step reaction: tyrosine is first activated by ATP to form Tyr-AMP and then transferred to the acceptor end of tRNA(Tyr). In Cupriavidus pinatubonensis (strain JMP 134 / LMG 1197) (Cupriavidus necator (strain JMP 134)), this protein is Tyrosine--tRNA ligase.